Here is a 384-residue protein sequence, read N- to C-terminus: Urea transporter 1 (384 aa).

Positions 1 to 23 (MDDNPTAVKLDQGGNQAPQGQGR) are disordered. 5 consecutive transmembrane segments (helical) span residues 61–81 (ISQV…VGLL), 85–105 (PWCA…ALLL), 111–131 (AITA…MAIY), 138–158 (FWWL…FSSA), and 169–189 (PVFT…TGHF). The N-linked (GlcNAc...) asparagine glycan is linked to Asn-206. Transmembrane regions (helical) follow at residues 237-257 (GGIF…HAAI), 279-299 (GLWG…FMAL), and 327-347 (VVGL…FLLL).

It belongs to the urea transporter family. In terms of assembly, homotrimer; each subunit contains a pore through which urea permeates. Identified in a complex with STOM.

It localises to the cell membrane. It is found in the basolateral cell membrane. It catalyses the reaction urea(in) = urea(out). Functionally, mediates the transport of urea driven by a concentration gradient across the cell membranes of erythrocytes and the renal inner medullary collecting duct which is critical to the urinary concentrating mechanism. Facilitates water transport in erythrocytes. This is Urea transporter 1 (SLC14A1) from Ovis aries (Sheep).